The chain runs to 131 residues: D-ribose pyranase (131 aa).

His20 functions as the Proton donor in the catalytic mechanism. Residues Asp28, His98, and 120-122 contribute to the substrate site; that span reads FSN.

It belongs to the RbsD / FucU family. RbsD subfamily. As to quaternary structure, homodecamer.

The protein resides in the cytoplasm. It catalyses the reaction beta-D-ribopyranose = beta-D-ribofuranose. Its pathway is carbohydrate metabolism; D-ribose degradation; D-ribose 5-phosphate from beta-D-ribopyranose: step 1/2. Its function is as follows. Catalyzes the interconversion of beta-pyran and beta-furan forms of D-ribose. The chain is D-ribose pyranase from Lactobacillus acidophilus (strain ATCC 700396 / NCK56 / N2 / NCFM).